The primary structure comprises 366 residues: 3-beta-hydroxysteroid dehydrogenase (366 aa).

Tyr-154 (proton donor) is an active-site residue.

It belongs to the 3-beta-HSD family.

It catalyses the reaction testosterone + NAD(+) = androst-4-ene-3,17-dione + NADH + H(+). The catalysed reaction is testosterone + NADP(+) = androst-4-ene-3,17-dione + NADPH + H(+). In terms of biological role, catalyzes the degradation of testosterone into androstenedione. The chain is 3-beta-hydroxysteroid dehydrogenase from Mycolicibacterium neoaurum (Mycobacterium neoaurum).